An 86-amino-acid polypeptide reads, in one-letter code: Neurotoxin-like protein NTL2 (86 aa).

An N-terminal signal peptide occupies residues 1 to 21 (MKTLLLSLVVVTIVCLDLGYT). Intrachain disulfides connect cysteine 24–cysteine 45, cysteine 38–cysteine 63, cysteine 67–cysteine 78, and cysteine 79–cysteine 84.

The protein belongs to the three-finger toxin family. Short-chain subfamily. Orphan group I sub-subfamily. In terms of tissue distribution, expressed by the venom gland.

The protein localises to the secreted. In Naja atra (Chinese cobra), this protein is Neurotoxin-like protein NTL2.